Reading from the N-terminus, the 317-residue chain is MRSYLDFEKPVAELEAKIDELRTLNAQEDTPAIGEELTKLEAKAQKALGDLYASLTPWQKTQVARHPQRPHFVDFVQGFIDDFTPLSGDRKFGDDAAIIGGFGWFEGQSICVIGQEKGADTESRIKHNFGLARPEGYRKAVRLMELADRFGVPVLSLVDTAGAFPGVDAEERGQAEAIARGTDACLSLGVPNIAVILGEGGSGGAIAIAACNTVLMLENAIYTVASPEASASILWRDATRAQDAAMSMKITAQDLLKFGIIDKIVPEPLGGAHRDSSTTIVAVKEAVVEALGALRDLSPSEVRRVRREKFLGMGRKL.

The 255-residue stretch at 39-293 folds into the CoA carboxyltransferase C-terminal domain; it reads KLEAKAQKAL…KEAVVEALGA (255 aa).

It belongs to the AccA family. As to quaternary structure, acetyl-CoA carboxylase is a heterohexamer composed of biotin carboxyl carrier protein (AccB), biotin carboxylase (AccC) and two subunits each of ACCase subunit alpha (AccA) and ACCase subunit beta (AccD).

Its subcellular location is the cytoplasm. The catalysed reaction is N(6)-carboxybiotinyl-L-lysyl-[protein] + acetyl-CoA = N(6)-biotinyl-L-lysyl-[protein] + malonyl-CoA. It functions in the pathway lipid metabolism; malonyl-CoA biosynthesis; malonyl-CoA from acetyl-CoA: step 1/1. Component of the acetyl coenzyme A carboxylase (ACC) complex. First, biotin carboxylase catalyzes the carboxylation of biotin on its carrier protein (BCCP) and then the CO(2) group is transferred by the carboxyltransferase to acetyl-CoA to form malonyl-CoA. The protein is Acetyl-coenzyme A carboxylase carboxyl transferase subunit alpha of Beijerinckia indica subsp. indica (strain ATCC 9039 / DSM 1715 / NCIMB 8712).